The primary structure comprises 696 residues: DNA ligase (696 aa).

Residues 36–40, 85–86, and Glu-123 each bind NAD(+); these read DAEYD and SL. Lys-125 functions as the N6-AMP-lysine intermediate in the catalytic mechanism. 4 residues coordinate NAD(+): Arg-146, Glu-181, Lys-319, and Lys-343. Zn(2+) contacts are provided by Cys-437, Cys-440, Cys-455, and Cys-461. Positions 618–696 constitute a BRCT domain; the sequence is PEGTSLAGKT…EDGLKALLGL (79 aa).

This sequence belongs to the NAD-dependent DNA ligase family. LigA subfamily. Mg(2+) serves as cofactor. Requires Mn(2+) as cofactor.

It catalyses the reaction NAD(+) + (deoxyribonucleotide)n-3'-hydroxyl + 5'-phospho-(deoxyribonucleotide)m = (deoxyribonucleotide)n+m + AMP + beta-nicotinamide D-nucleotide.. Functionally, DNA ligase that catalyzes the formation of phosphodiester linkages between 5'-phosphoryl and 3'-hydroxyl groups in double-stranded DNA using NAD as a coenzyme and as the energy source for the reaction. It is essential for DNA replication and repair of damaged DNA. In Bordetella bronchiseptica (strain ATCC BAA-588 / NCTC 13252 / RB50) (Alcaligenes bronchisepticus), this protein is DNA ligase.